The following is a 212-amino-acid chain: ATP-dependent Clp protease proteolytic subunit (212 aa).

S114 (nucleophile) is an active-site residue. Residue H139 is part of the active site.

It belongs to the peptidase S14 family. In terms of assembly, fourteen ClpP subunits assemble into 2 heptameric rings which stack back to back to give a disk-like structure with a central cavity, resembling the structure of eukaryotic proteasomes.

It is found in the cytoplasm. The catalysed reaction is Hydrolysis of proteins to small peptides in the presence of ATP and magnesium. alpha-casein is the usual test substrate. In the absence of ATP, only oligopeptides shorter than five residues are hydrolyzed (such as succinyl-Leu-Tyr-|-NHMec, and Leu-Tyr-Leu-|-Tyr-Trp, in which cleavage of the -Tyr-|-Leu- and -Tyr-|-Trp bonds also occurs).. Cleaves peptides in various proteins in a process that requires ATP hydrolysis. Has a chymotrypsin-like activity. Plays a major role in the degradation of misfolded proteins. This chain is ATP-dependent Clp protease proteolytic subunit, found in Laribacter hongkongensis (strain HLHK9).